The chain runs to 64 residues: Large ribosomal subunit protein bL35 (64 aa).

Residues 1-25 are disordered; that stretch reads MPKMKTHRGAAKRLKKTGTGKLKRA.

Belongs to the bacterial ribosomal protein bL35 family.

In Clostridioides difficile (strain 630) (Peptoclostridium difficile), this protein is Large ribosomal subunit protein bL35.